A 640-amino-acid polypeptide reads, in one-letter code: PAN2-PAN3 deadenylation complex subunit PAN3 (640 aa).

The segment at 17-46 (ENKDILCRNVLIYGHCRYEDQGCTYNHDQN) adopts a C3H1-type zinc-finger fold. 2 stretches are compositionally biased toward polar residues: residues 43–53 (HDQNKNSSQPE) and 63–87 (DSPS…SQAA). Residues 43–101 (HDQNKNSSQPEAPSKKMFNVDSPSFTPSGQSTVLPKKTTLSSQAASAAPFTPRGGGTPT) form a disordered region. The segment at 237 to 498 (QVIPNSGLPQ…TIEHFMTGIA (262 aa)) is pseudokinase domain. Residues asparagine 263, arginine 288, 338–345 (DFHPLSKT), and 397–398 (SK) each bind ATP. The stretch at 499–537 (SQMTTFFDLALQDNDEKLFHLAREVENGRIARSLMKLLT) forms a coiled coil. Positions 538–640 (ILERGDYDGV…SKTGAPGANT (103 aa)) are knob domain.

This sequence belongs to the protein kinase superfamily. PAN3 family. Homodimer. Forms a heterotrimer with a catalytic subunit PAN2 to form the poly(A)-nuclease (PAN) deadenylation complex. Interacts (via PAM-2 motif) with poly(A)-binding protein PAB1 (via PABC domain), conferring substrate specificity of the enzyme complex.

Its subcellular location is the cytoplasm. Functionally, regulatory subunit of the poly(A)-nuclease (PAN) deadenylation complex, one of two cytoplasmic mRNA deadenylases involved in mRNA turnover. PAN specifically shortens poly(A) tails of RNA and the activity is stimulated by poly(A)-binding protein PAB1. PAN deadenylation is followed by rapid degradation of the shortened mRNA tails by the CCR4-NOT complex. Deadenylated mRNAs are then degraded by two alternative mechanisms, namely exosome-mediated 3'-5' exonucleolytic degradation, or deadenylation-dependent mRNA decaping and subsequent 5'-3' exonucleolytic degradation by XRN1. May also be involved in post-transcriptional maturation of mRNA poly(A) tails. PAN3 acts as a positive regulator for PAN activity, recruiting the catalytic subunit PAN2 to mRNA via its interaction with RNA and with PAB1. The protein is PAN2-PAN3 deadenylation complex subunit PAN3 of Chaetomium thermophilum (strain DSM 1495 / CBS 144.50 / IMI 039719) (Thermochaetoides thermophila).